A 236-amino-acid chain; its full sequence is MNETITYDTWNDMLSKQITDQLIDELDVLKWAYRTYGEKIVYACSFGAEGMVLLDLISKINKNAHIIFLDTGLHFQETYELIETVKERYPGFAIQMLEPELSLTEQGTKYGGELWKHNPNLCCQLRKIEPLKKHLSGMTAWISGLRRDQSPTRKHIQYVNLDQKFELIKICPLIHWTWDDVWTYIRLHNLPYNKLHDQHYPSIGCEMCTLPSPDPNDERAGRWAGREKTECGLHQE.

[4Fe-4S] cluster-binding residues include Cys-122, Cys-123, Cys-205, and Cys-208. The segment at 216–236 is disordered; the sequence is NDERAGRWAGREKTECGLHQE. Cys-231 (nucleophile; cysteine thiosulfonate intermediate) is an active-site residue.

The protein belongs to the PAPS reductase family. CysH subfamily. It depends on [4Fe-4S] cluster as a cofactor.

The protein localises to the cytoplasm. It carries out the reaction [thioredoxin]-disulfide + sulfite + AMP + 2 H(+) = adenosine 5'-phosphosulfate + [thioredoxin]-dithiol. The protein operates within sulfur metabolism; hydrogen sulfide biosynthesis; sulfite from sulfate. In terms of biological role, catalyzes the formation of sulfite from adenosine 5'-phosphosulfate (APS) using thioredoxin as an electron donor. This is Adenosine 5'-phosphosulfate reductase 2 from Bacillus subtilis (strain 168).